Consider the following 355-residue polypeptide: uncharacterized protein (355 aa).

This is an uncharacterized protein from Aquifex aeolicus (strain VF5).